The sequence spans 488 residues: Cysteine--tRNA ligase (488 aa).

Zn(2+) is bound at residue cysteine 28. The 'HIGH' region signature appears at 30–40 (PTVYDDAHLGH). The Zn(2+) site is built by cysteine 209, histidine 239, and glutamate 243. The short motif at 271–275 (KMSKS) is the 'KMSKS' region element. Lysine 274 provides a ligand contact to ATP.

The protein belongs to the class-I aminoacyl-tRNA synthetase family. Monomer. Zn(2+) is required as a cofactor.

The protein resides in the cytoplasm. It carries out the reaction tRNA(Cys) + L-cysteine + ATP = L-cysteinyl-tRNA(Cys) + AMP + diphosphate. In Helicobacter hepaticus (strain ATCC 51449 / 3B1), this protein is Cysteine--tRNA ligase.